The primary structure comprises 412 residues: Adenosine receptor A2a (412 aa).

Over 1–7 the chain is Extracellular; the sequence is MSTMGSW. The helical transmembrane segment at 8-32 threads the bilayer; it reads VYITVELAIAVLAILGNVLVCWAVW. At 33 to 42 the chain is on the cytoplasmic side; that stretch reads LNSNLQNVTN. Residues 43–66 form a helical membrane-spanning segment; that stretch reads YFVVSLAAADIAVGVLAIPFAITI. At 67–77 the chain is on the extracellular side; sequence STGFCAACHNC. 3 cysteine pairs are disulfide-bonded: C71/C159, C74/C146, and C77/C166. Residues 78 to 100 form a helical membrane-spanning segment; sequence LFFACFVLVLTQSSIFSLLAIAI. At 101–120 the chain is on the cytoplasmic side; sequence DRYIAIRIPLRYNGLVTGTR. Residues 121–143 traverse the membrane as a helical segment; sequence AKGIIAVCWVLSFAIGLTPMLGW. Residues 144–173 lie on the Extracellular side of the membrane; that stretch reads NNCSQPKEGRNYSQGCGEGQVACLFEDVVP. 2 N-linked (GlcNAc...) asparagine glycosylation sites follow: N145 and N154. Position 169 (E169) interacts with adenosine. Residues 174–198 form a helical membrane-spanning segment; sequence MNYMVYYNFFAFVLVPLLLMLGVYL. The Cytoplasmic portion of the chain corresponds to 199 to 234; sequence RIFLAARRQLKQMESQPLPGERARSTLQKEVHAAKS. Residues 235–258 form a helical membrane-spanning segment; it reads LAIIVGLFALCWLPLHIINCFTFF. N253 is a binding site for adenosine. A disulfide bond links C259 and C262. The Extracellular segment spans residues 259 to 266; the sequence is CPECSHAP. The helical transmembrane segment at 267–290 threads the bilayer; it reads LWLMYLTIVLSHTNSVVNPFIYAY. Adenosine is bound by residues S277 and H278. The Cytoplasmic segment spans residues 291–412; the sequence is RIREFRQTFR…PLAQDGAGVS (122 aa). The interval 392-412 is disordered; it reads GACPESPGLEGPLAQDGAGVS.

Belongs to the G-protein coupled receptor 1 family. As to quaternary structure, interacts (via cytoplasmic C-terminal domain) with USP4; the interaction is direct. May interact with DRD4. Interacts with NECAB2. Interacts (via cytoplasmic C-terminal domain) with GAS2L2; interaction enhances receptor-mediated adenylyl cyclase activity. Post-translationally, ubiquitinated. Deubiquitinated by USP4; leading to stabilization and expression at the cell surface.

It is found in the cell membrane. Functionally, receptor for adenosine. The activity of this receptor is mediated by G proteins which activate adenylyl cyclase. In Canis lupus familiaris (Dog), this protein is Adenosine receptor A2a (ADORA2A).